A 275-amino-acid polypeptide reads, in one-letter code: UPF0328 protein ECU05_0050 (275 aa).

It belongs to the UPF0328 family.

The chain is UPF0328 protein ECU05_0050 from Encephalitozoon cuniculi (strain GB-M1) (Microsporidian parasite).